A 437-amino-acid chain; its full sequence is MDLSSSPNHPITVVSTFASPFEGPPSVGDSNSSARKPISLWPGMYHSPVTNALWEARCKIFERLLDPPKDAPPQSELLTKTPSQSRTTILYNFSTDYILREQYRDPWNEVRIGKLLEDLDALAGTISVKHCSDDDSTTRPLLLVTASVDKIVLKKPISVDIDLKIVGAVIWVGRSSIEIQLEVSQSTKEGSNAADDVALSANFIFVARDSKTAKAAPVNRLSPETEQEKLLFDEAEARSSMRKRKRGDQERREFENGEANRLQTLLAEGRIFCDMPALADRDSILLRDTRQENSLICQPQQRNIHGRIFGGFLLHRAFELAFSTAYAFAGLVPYFLEIDHVDFXRPVDVGDFLRLKSCVLYTELHNPDQPLINIEVVAHVTRPELRSSEVSNTFYFTFTVRPEAKATKNGYRIRNVVPATEEEARRILERMDAEACI.

The transit peptide at 1 to 13 (MDLSSSPNHPITV) directs the protein to the chloroplast. HotDog ACOT-type domains are found at residues 89-211 (ILYN…RDSK) and 287-404 (RDTR…RPEA).

The protein belongs to the acyl coenzyme A hydrolase family. As to expression, mostly expressed at low levels in glandular trichomes (lupulin glands), and, to a lower extent, in stems, leaves, flowers and cones.

Its subcellular location is the plastid. The protein resides in the chloroplast. Its function is as follows. Acyl-CoA thioesterases are a group of enzymes that catalyze the hydrolysis of acyl-CoAs to the free fatty acid and coenzyme A (CoASH), providing the potential to regulate intracellular levels of acyl-CoAs, free fatty acids and CoASH. The polypeptide is Acyl-coenzyme A thioesterase 2, chloroplastic (Humulus lupulus (European hop)).